Reading from the N-terminus, the 461-residue chain is Vitamin K-dependent protein C (461 aa).

Residues methionine 1–glycine 18 form the signal peptide. A propeptide spanning residues valine 19–arginine 41 is cleaved from the precursor. In terms of domain architecture, Gla spans alanine 42–aspartate 87. 10 positions are modified to 4-carboxyglutamate: glutamate 47, glutamate 48, glutamate 55, glutamate 57, glutamate 60, glutamate 61, glutamate 66, glutamate 67, glutamate 70, and glutamate 76. Cysteine 58 and cysteine 63 form a disulfide bridge. Cystine bridges form between cysteine 91–cysteine 110, cysteine 100–cysteine 105, cysteine 104–cysteine 119, cysteine 121–cysteine 130, cysteine 139–cysteine 150, cysteine 146–cysteine 159, cysteine 161–cysteine 174, cysteine 182–cysteine 320, and cysteine 239–cysteine 255. EGF-like domains follow at residues leucine 96 to glutamine 131 and glycine 135 to arginine 175. Aspartate 112 carries the post-translational modification (3R)-3-hydroxyaspartate. In terms of domain architecture, Peptidase S1 spans isoleucine 213 to glycine 450. Asparagine 215 carries N-linked (GlcNAc...) asparagine glycosylation. The active-site Charge relay system is histidine 254. An N-linked (GlcNAc...) asparagine glycan is attached at asparagine 291. The active-site Charge relay system is aspartate 300. N-linked (GlcNAc...) asparagine glycosylation occurs at asparagine 355. 2 disulfide bridges follow: cysteine 373-cysteine 387 and cysteine 398-cysteine 426. Catalysis depends on serine 402, which acts as the Charge relay system.

This sequence belongs to the peptidase S1 family. In terms of assembly, synthesized as a single chain precursor, which is cleaved into a light chain and a heavy chain held together by a disulfide bond. The enzyme is then activated by thrombin, which cleaves a tetradecapeptide from the amino end of the heavy chain; this reaction, which occurs at the surface of endothelial cells, is strongly promoted by thrombomodulin. The vitamin K-dependent, enzymatic carboxylation of some Glu residues allows the modified protein to bind calcium. In terms of processing, the iron and 2-oxoglutarate dependent 3-hydroxylation of aspartate and asparagine is (R) stereospecific within EGF domains. Plasma; synthesized in the liver.

Its subcellular location is the secreted. The protein localises to the golgi apparatus. It is found in the endoplasmic reticulum. It catalyses the reaction Degradation of blood coagulation factors Va and VIIIa.. Functionally, protein C is a vitamin K-dependent serine protease that regulates blood coagulation by inactivating factors Va and VIIIa in the presence of calcium ions and phospholipids. Exerts a protective effect on the endothelial cell barrier function. This chain is Vitamin K-dependent protein C (Proc), found in Rattus norvegicus (Rat).